Consider the following 667-residue polypeptide: tRNA 5-methylaminomethyl-2-thiouridine biosynthesis bifunctional protein MnmC (667 aa).

Residues 1 to 12 are compositionally biased toward polar residues; sequence MSKQQAPNTTGI. Positions 1 to 20 are disordered; the sequence is MSKQQAPNTTGIGTADLQWH. Residues 1–240 are tRNA (mnm(5)s(2)U34)-methyltransferase; that stretch reads MSKQQAPNTT…KRECLRGVLE (240 aa). The interval 268–667 is FAD-dependent cmnm(5)s(2)U34 oxidoreductase; sequence IGAGIAGAAC…LVRSLKKPPL (400 aa).

The protein in the N-terminal section; belongs to the methyltransferase superfamily. tRNA (mnm(5)s(2)U34)-methyltransferase family. This sequence in the C-terminal section; belongs to the DAO family. It depends on FAD as a cofactor.

Its subcellular location is the cytoplasm. It catalyses the reaction 5-aminomethyl-2-thiouridine(34) in tRNA + S-adenosyl-L-methionine = 5-methylaminomethyl-2-thiouridine(34) in tRNA + S-adenosyl-L-homocysteine + H(+). In terms of biological role, catalyzes the last two steps in the biosynthesis of 5-methylaminomethyl-2-thiouridine (mnm(5)s(2)U) at the wobble position (U34) in tRNA. Catalyzes the FAD-dependent demodification of cmnm(5)s(2)U34 to nm(5)s(2)U34, followed by the transfer of a methyl group from S-adenosyl-L-methionine to nm(5)s(2)U34, to form mnm(5)s(2)U34. The sequence is that of tRNA 5-methylaminomethyl-2-thiouridine biosynthesis bifunctional protein MnmC from Magnetococcus marinus (strain ATCC BAA-1437 / JCM 17883 / MC-1).